A 139-amino-acid polypeptide reads, in one-letter code: Ribulose bisphosphate carboxylase small subunit (139 aa).

The protein belongs to the RuBisCO small chain family. Heterohexadecamer of 8 large and 8 small subunits.

It is found in the plastid. It localises to the chloroplast. Its function is as follows. RuBisCO catalyzes two reactions: the carboxylation of D-ribulose 1,5-bisphosphate, the primary event in carbon dioxide fixation, as well as the oxidative fragmentation of the pentose substrate in the photorespiration process. Both reactions occur simultaneously and in competition at the same active site. Although the small subunit is not catalytic it is essential for maximal activity. In Guillardia theta (Cryptophyte), this protein is Ribulose bisphosphate carboxylase small subunit.